The primary structure comprises 122 residues: Large ribosomal subunit protein uL14 (122 aa).

This sequence belongs to the universal ribosomal protein uL14 family. In terms of assembly, part of the 50S ribosomal subunit. Forms a cluster with proteins L3 and L19. In the 70S ribosome, L14 and L19 interact and together make contacts with the 16S rRNA in bridges B5 and B8.

Its function is as follows. Binds to 23S rRNA. Forms part of two intersubunit bridges in the 70S ribosome. The polypeptide is Large ribosomal subunit protein uL14 (Delftia acidovorans (strain DSM 14801 / SPH-1)).